A 250-amino-acid chain; its full sequence is Pyridoxine 5'-phosphate synthase (250 aa).

Positions 8 and 19 each coordinate 3-amino-2-oxopropyl phosphate. The active-site Proton acceptor is His44. Residues Arg46 and His51 each coordinate 1-deoxy-D-xylulose 5-phosphate. Glu76 functions as the Proton acceptor in the catalytic mechanism. Thr106 contacts 1-deoxy-D-xylulose 5-phosphate. His200 (proton donor) is an active-site residue. 3-amino-2-oxopropyl phosphate-binding positions include Asp201 and 223-224; that span reads GH.

This sequence belongs to the PNP synthase family. In terms of assembly, homooctamer; tetramer of dimers.

The protein resides in the cytoplasm. The catalysed reaction is 3-amino-2-oxopropyl phosphate + 1-deoxy-D-xylulose 5-phosphate = pyridoxine 5'-phosphate + phosphate + 2 H2O + H(+). It functions in the pathway cofactor biosynthesis; pyridoxine 5'-phosphate biosynthesis; pyridoxine 5'-phosphate from D-erythrose 4-phosphate: step 5/5. In terms of biological role, catalyzes the complicated ring closure reaction between the two acyclic compounds 1-deoxy-D-xylulose-5-phosphate (DXP) and 3-amino-2-oxopropyl phosphate (1-amino-acetone-3-phosphate or AAP) to form pyridoxine 5'-phosphate (PNP) and inorganic phosphate. This is Pyridoxine 5'-phosphate synthase from Rhizobium meliloti (strain 1021) (Ensifer meliloti).